The sequence spans 142 residues: Small ribosomal subunit protein uS12 (142 aa).

The interval 1 to 44 (MANGKYAARKLKQDRQKHRWSDSDYARRARGLGKKSDPLEGAPQ) is disordered. Residues 11–27 (LKQDRQKHRWSDSDYAR) are compositionally biased toward basic and acidic residues.

It belongs to the universal ribosomal protein uS12 family. In terms of assembly, part of the 30S ribosomal subunit.

In terms of biological role, with S4 and S5 plays an important role in translational accuracy. Located at the interface of the 30S and 50S subunits. This Natronomonas pharaonis (strain ATCC 35678 / DSM 2160 / CIP 103997 / JCM 8858 / NBRC 14720 / NCIMB 2260 / Gabara) (Halobacterium pharaonis) protein is Small ribosomal subunit protein uS12.